Here is a 286-residue protein sequence, read N- to C-terminus: Nucleoid occlusion protein (286 aa).

Residues 147–166 (EALAQRLGKNQSTVANKLRL) constitute a DNA-binding region (H-T-H motif).

Belongs to the ParB family.

It localises to the cytoplasm. The protein resides in the nucleoid. Effects nucleoid occlusion by binding relatively nonspecifically to DNA and preventing the assembly of the division machinery in the vicinity of the nucleoid, especially under conditions that disturb the cell cycle. It helps to coordinate cell division and chromosome segregation by preventing the formation of the Z ring through the nucleoid, which would cause chromosome breakage. The sequence is that of Nucleoid occlusion protein from Oceanobacillus iheyensis (strain DSM 14371 / CIP 107618 / JCM 11309 / KCTC 3954 / HTE831).